A 336-amino-acid polypeptide reads, in one-letter code: Shematrin-like protein 1 (336 aa).

A signal peptide spans Met1–Ala16.

In terms of tissue distribution, prismatic layer of shell (at protein level). Expressed primarily in the mantle with highest level in the mantle edge and lower level in the mantle pallium.

The protein resides in the secreted. This chain is Shematrin-like protein 1, found in Pinctada maxima (Silver-lipped pearl oyster).